The sequence spans 274 residues: Ribosomal RNA small subunit methyltransferase A (274 aa).

Histidine 15, leucine 17, glycine 42, glutamate 64, aspartate 89, and asparagine 109 together coordinate S-adenosyl-L-methionine.

This sequence belongs to the class I-like SAM-binding methyltransferase superfamily. rRNA adenine N(6)-methyltransferase family. RsmA subfamily.

Its subcellular location is the cytoplasm. The enzyme catalyses adenosine(1518)/adenosine(1519) in 16S rRNA + 4 S-adenosyl-L-methionine = N(6)-dimethyladenosine(1518)/N(6)-dimethyladenosine(1519) in 16S rRNA + 4 S-adenosyl-L-homocysteine + 4 H(+). In terms of biological role, specifically dimethylates two adjacent adenosines (A1518 and A1519) in the loop of a conserved hairpin near the 3'-end of 16S rRNA in the 30S particle. May play a critical role in biogenesis of 30S subunits. In Synechococcus sp. (strain RCC307), this protein is Ribosomal RNA small subunit methyltransferase A.